The sequence spans 560 residues: Dihydroxy-acid dehydratase (560 aa).

Cysteine 52 is a [2Fe-2S] cluster binding site. Position 84 (aspartate 84) interacts with Mg(2+). [2Fe-2S] cluster is bound at residue cysteine 125. Positions 126 and 127 each coordinate Mg(2+). Lysine 127 is subject to N6-carboxylysine. A [2Fe-2S] cluster-binding site is contributed by cysteine 197. Glutamate 448 contacts Mg(2+). The active-site Proton acceptor is the serine 474.

Belongs to the IlvD/Edd family. As to quaternary structure, homodimer. [2Fe-2S] cluster is required as a cofactor. Requires Mg(2+) as cofactor.

The enzyme catalyses (2R)-2,3-dihydroxy-3-methylbutanoate = 3-methyl-2-oxobutanoate + H2O. It carries out the reaction (2R,3R)-2,3-dihydroxy-3-methylpentanoate = (S)-3-methyl-2-oxopentanoate + H2O. The protein operates within amino-acid biosynthesis; L-isoleucine biosynthesis; L-isoleucine from 2-oxobutanoate: step 3/4. Its pathway is amino-acid biosynthesis; L-valine biosynthesis; L-valine from pyruvate: step 3/4. Its function is as follows. Functions in the biosynthesis of branched-chain amino acids. Catalyzes the dehydration of (2R,3R)-2,3-dihydroxy-3-methylpentanoate (2,3-dihydroxy-3-methylvalerate) into 2-oxo-3-methylpentanoate (2-oxo-3-methylvalerate) and of (2R)-2,3-dihydroxy-3-methylbutanoate (2,3-dihydroxyisovalerate) into 2-oxo-3-methylbutanoate (2-oxoisovalerate), the penultimate precursor to L-isoleucine and L-valine, respectively. The polypeptide is Dihydroxy-acid dehydratase (Francisella tularensis subsp. tularensis (strain WY96-3418)).